A 227-amino-acid chain; its full sequence is LysM and putative peptidoglycan-binding domain-containing protein 1 (227 aa).

The span at 1 to 11 (MASPSRQPPPG) shows a compositional bias: pro residues. The tract at residues 1–22 (MASPSRQPPPGGSGLLQGSRAR) is disordered. Phosphoserine occurs at positions 23 and 33. The region spanning 40 to 84 (LEHQLEPGDTLAGLALKYGVTMEQIKRANRLYTNDSIFLKKTLYI) is the LysM domain. Residues 97-150 (LDSEEEKDGEEKVHPSNSEVWPHSTERKKQETGAGRANGEVLPTPGQETPTPIH) form a disordered region. 4 positions are modified to phosphoserine: Ser99, Ser166, Ser194, and Ser212.

This chain is LysM and putative peptidoglycan-binding domain-containing protein 1 (LYSMD1), found in Homo sapiens (Human).